Consider the following 129-residue polypeptide: Follitropin subunit beta (129 aa).

The signal sequence occupies residues 1-20 (MKTAQFYIFFFCWKAIWCNG). 6 disulfides stabilise this stretch: C21-C69, C35-C84, C38-C122, C46-C100, C50-C102, and C105-C112. N25 and N42 each carry an N-linked (GlcNAc...) asparagine glycan.

The protein belongs to the glycoprotein hormones subunit beta family. In terms of assembly, heterodimer. The active follitropin is a heterodimer composed of an alpha chain/CGA shared with other hormones and a unique beta chain/FSHB shown here.

It localises to the secreted. Its function is as follows. Together with the alpha chain CGA constitutes follitropin, the follicle-stimulating hormone, and provides its biological specificity to the hormone heterodimer. Binds FSHR, a G protein-coupled receptor, on target cells to activate downstream signaling pathways. Follitropin is involved in follicle development and spermatogenesis in reproductive organs. The chain is Follitropin subunit beta (FSHB) from Monodelphis domestica (Gray short-tailed opossum).